Reading from the N-terminus, the 67-residue chain is Colostrum trypsin inhibitor (67 aa).

The region spanning 8 to 58 is the BPTI/Kunitz inhibitor domain; the sequence is CQLPQARGPCKAALLRYFYNSTSNACEPFTYGGCQGNNBNFETTEMCLRIC. 3 disulfide bridges follow: C8/C58, C17/C41, and C33/C54. N27 carries an N-linked (GlcNAc...) asparagine glycan.

The protein localises to the secreted. This chain is Colostrum trypsin inhibitor, found in Bos taurus (Bovine).